The following is a 293-amino-acid chain: Phosphatidylserine decarboxylase proenzyme (293 aa).

Active-site charge relay system; for autoendoproteolytic cleavage activity residues include aspartate 88, histidine 144, and serine 247. The Schiff-base intermediate with substrate; via pyruvic acid; for decarboxylase activity role is filled by serine 247. Serine 247 is subject to Pyruvic acid (Ser); by autocatalysis.

This sequence belongs to the phosphatidylserine decarboxylase family. PSD-B subfamily. Prokaryotic type I sub-subfamily. As to quaternary structure, heterodimer of a large membrane-associated beta subunit and a small pyruvoyl-containing alpha subunit. It depends on pyruvate as a cofactor. Post-translationally, is synthesized initially as an inactive proenzyme. Formation of the active enzyme involves a self-maturation process in which the active site pyruvoyl group is generated from an internal serine residue via an autocatalytic post-translational modification. Two non-identical subunits are generated from the proenzyme in this reaction, and the pyruvate is formed at the N-terminus of the alpha chain, which is derived from the carboxyl end of the proenzyme. The autoendoproteolytic cleavage occurs by a canonical serine protease mechanism, in which the side chain hydroxyl group of the serine supplies its oxygen atom to form the C-terminus of the beta chain, while the remainder of the serine residue undergoes an oxidative deamination to produce ammonia and the pyruvoyl prosthetic group on the alpha chain. During this reaction, the Ser that is part of the protease active site of the proenzyme becomes the pyruvoyl prosthetic group, which constitutes an essential element of the active site of the mature decarboxylase.

The protein localises to the cell membrane. It carries out the reaction a 1,2-diacyl-sn-glycero-3-phospho-L-serine + H(+) = a 1,2-diacyl-sn-glycero-3-phosphoethanolamine + CO2. Its pathway is phospholipid metabolism; phosphatidylethanolamine biosynthesis; phosphatidylethanolamine from CDP-diacylglycerol: step 2/2. Its function is as follows. Catalyzes the formation of phosphatidylethanolamine (PtdEtn) from phosphatidylserine (PtdSer). This chain is Phosphatidylserine decarboxylase proenzyme, found in Xylella fastidiosa (strain 9a5c).